The chain runs to 164 residues: C-phycoerythrin class 1 subunit alpha (164 aa).

(2R,3E)-phycoerythrobilin contacts are provided by C82 and C139.

Belongs to the phycobiliprotein family. As to quaternary structure, heterodimer of an alpha and a beta chain. In terms of processing, contains two covalently linked phycoerythrobilin chromophores.

It is found in the cellular thylakoid membrane. Light-harvesting photosynthetic bile pigment-protein from the phycobiliprotein complex. The sequence is that of C-phycoerythrin class 1 subunit alpha (cpeA) from Synechococcus sp. (strain WH8020).